Here is a 163-residue protein sequence, read N- to C-terminus: 3-hydroxyacyl-[acyl-carrier-protein] dehydratase FabZ (163 aa).

The active site involves His64.

It belongs to the thioester dehydratase family. FabZ subfamily.

It localises to the cytoplasm. The catalysed reaction is a (3R)-hydroxyacyl-[ACP] = a (2E)-enoyl-[ACP] + H2O. Its function is as follows. Involved in unsaturated fatty acids biosynthesis. Catalyzes the dehydration of short chain beta-hydroxyacyl-ACPs and long chain saturated and unsaturated beta-hydroxyacyl-ACPs. In Caulobacter sp. (strain K31), this protein is 3-hydroxyacyl-[acyl-carrier-protein] dehydratase FabZ.